A 134-amino-acid polypeptide reads, in one-letter code: ATP synthase epsilon chain, chloroplastic (134 aa).

Belongs to the ATPase epsilon chain family. As to quaternary structure, F-type ATPases have 2 components, CF(1) - the catalytic core - and CF(0) - the membrane proton channel. CF(1) has five subunits: alpha(3), beta(3), gamma(1), delta(1), epsilon(1). CF(0) has three main subunits: a, b and c.

It is found in the plastid. It localises to the chloroplast thylakoid membrane. Produces ATP from ADP in the presence of a proton gradient across the membrane. This is ATP synthase epsilon chain, chloroplastic from Chlorella vulgaris (Green alga).